The sequence spans 300 residues: 11-beta-hydroxysteroid dehydrogenase 1 (300 aa).

The Cytoplasmic portion of the chain corresponds to 1–7 (MAFLKKY). A helical; Signal-anchor for type II membrane protein membrane pass occupies residues 8-24 (LLTILMVFLAYYYYSAN). The Lumenal portion of the chain corresponds to 25–300 (EKFRPEMLQG…SNEKLYGRWA (276 aa)). NADP(+)-binding positions include 41-67 (GASK…TARS), 92-93 (SM), and 119-123 (NHVLY). Ser170 lines the substrate pocket. The active-site Proton acceptor is the Tyr183. Residue 183–187 (YSASK) participates in NADP(+) binding. The N-linked (GlcNAc...) asparagine glycan is linked to Asn207. 218–222 (IDTET) provides a ligand contact to NADP(+).

This sequence belongs to the short-chain dehydrogenases/reductases (SDR) family. As to quaternary structure, homodimer. In terms of tissue distribution, widely expressed in all peripheral tissues, with highest expression in liver, followed by kidney and lung, and very low expression in heart, lung, spleen, stomach, small intestine, colon, skin, skeletal muscle, and ovary.

The protein localises to the endoplasmic reticulum membrane. The catalysed reaction is an 11beta-hydroxysteroid + NADP(+) = an 11-oxosteroid + NADPH + H(+). It catalyses the reaction cortisone + NADPH + H(+) = cortisol + NADP(+). The enzyme catalyses corticosterone + NADP(+) = 11-dehydrocorticosterone + NADPH + H(+). It carries out the reaction a 7beta-hydroxysteroid + NADP(+) = a 7-oxosteroid + NADPH + H(+). The catalysed reaction is 7-oxocholesterol + NADPH + H(+) = 7beta-hydroxycholesterol + NADP(+). It catalyses the reaction chenodeoxycholate + NADP(+) = 7-oxolithocholate + NADPH + H(+). The enzyme catalyses 7-oxolithocholate + NADPH + H(+) = ursodeoxycholate + NADP(+). It carries out the reaction glycochenodeoxycholate + NADP(+) = 7-oxoglycolithocholate + NADPH + H(+). The catalysed reaction is taurochenodeoxycholate + NADP(+) = 7-oxotaurolithocholate + NADPH + H(+). It catalyses the reaction tauroursodeoxycholate + NADP(+) = 7-oxotaurolithocholate + NADPH + H(+). The enzyme catalyses glycoursodeoxycholate + NADP(+) = 7-oxoglycolithocholate + NADPH + H(+). It carries out the reaction 7-oxopregnenolone + NADPH + H(+) = 7beta-hydroxypregnenolone + NADP(+). The catalysed reaction is 3beta,7alpha-dihydroxyandrost-5-en-17-one + NADP(+) = 3beta-hydroxy-5-androstene-7,17-dione + NADPH + H(+). It catalyses the reaction 3beta-hydroxy-5-androstene-7,17-dione + NADPH + H(+) = 3beta,7beta-dihydroxyandrost-5-en-17-one + NADP(+). The enzyme catalyses 3beta-hydroxy-5alpha-androstane-7,17-dione + NADPH + H(+) = 3beta,7beta-dihydroxy-5alpha-androstan-17-one + NADP(+). In terms of biological role, controls the reversible conversion of biologically active glucocorticoids such as cortisone to cortisol, and 11-dehydrocorticosterone to corticosterone in the presence of NADP(H). Participates in the corticosteroid receptor-mediated anti-inflammatory response, as well as metabolic and homeostatic processes. Bidirectional in vitro, predominantly functions as a reductase in vivo, thereby increasing the concentration of active glucocorticoids. It has broad substrate specificity, besides glucocorticoids, it accepts other steroid and sterol substrates. Interconverts 7-oxo- and 7-hydroxy-neurosteroids such as 7-oxopregnenolone and 7beta-hydroxypregnenolone, 7-oxodehydroepiandrosterone (3beta-hydroxy-5-androstene-7,17-dione) and 7beta-hydroxydehydroepiandrosterone (3beta,7beta-dihydroxyandrost-5-en-17-one), among others. Catalyzes the stereo-specific conversion of the major dietary oxysterol, 7-ketocholesterol (7-oxocholesterol), into the more polar 7-beta-hydroxycholesterol metabolite. 7-oxocholesterol is one of the most important oxysterols, it participates in several events such as induction of apoptosis, accumulation in atherosclerotic lesions, lipid peroxidation, and induction of foam cell formation. Mediates the 7-oxo reduction of 7-oxolithocholate mainly to chenodeoxycholate, and to a lesser extent to ursodeoxycholate, both in its free form and when conjugated to glycine or taurine, providing a link between glucocorticoid activation and bile acid metabolism. Catalyzes the synthesis of 7-beta-25-dihydroxycholesterol from 7-oxo-25-hydroxycholesterol in vitro, which acts as a ligand for the G-protein-coupled receptor (GPCR) Epstein-Barr virus-induced gene 2 (EBI2) and may thereby regulate immune cell migration. This is 11-beta-hydroxysteroid dehydrogenase 1 (HSD11B1) from Cavia porcellus (Guinea pig).